The sequence spans 360 residues: Peptide chain release factor 1 (360 aa).

Residue glutamine 235 is modified to N5-methylglutamine. Positions 281–307 (ERQRADSERSADRRNQVGSGDRSERIR) are enriched in basic and acidic residues. Positions 281–310 (ERQRADSERSADRRNQVGSGDRSERIRTYN) are disordered.

Belongs to the prokaryotic/mitochondrial release factor family. Methylated by PrmC. Methylation increases the termination efficiency of RF1.

It is found in the cytoplasm. Peptide chain release factor 1 directs the termination of translation in response to the peptide chain termination codons UAG and UAA. The protein is Peptide chain release factor 1 of Sinorhizobium medicae (strain WSM419) (Ensifer medicae).